Here is a 419-residue protein sequence, read N- to C-terminus: Adenylosuccinate synthetase 1 (419 aa).

Residue 11 to 17 (GDEGKGK) coordinates GTP. The active-site Proton acceptor is the Asp12. Residues Asp12 and Gly39 each contribute to the Mg(2+) site. IMP contacts are provided by residues 12-15 (DEGK), 37-40 (NAGH), Arg138, Gln220, and Arg298. His40 serves as the catalytic Proton donor. 294–300 (TVSKRPR) is a substrate binding site. GTP is bound by residues Arg300, 326-328 (NVD), and 407-409 (SYG).

It belongs to the adenylosuccinate synthetase family. Homodimer. The cofactor is Mg(2+).

Its subcellular location is the cytoplasm. The enzyme catalyses IMP + L-aspartate + GTP = N(6)-(1,2-dicarboxyethyl)-AMP + GDP + phosphate + 2 H(+). Its pathway is purine metabolism; AMP biosynthesis via de novo pathway; AMP from IMP: step 1/2. Functionally, plays an important role in the de novo pathway of purine nucleotide biosynthesis. Catalyzes the first committed step in the biosynthesis of AMP from IMP. This is Adenylosuccinate synthetase 1 from Photorhabdus laumondii subsp. laumondii (strain DSM 15139 / CIP 105565 / TT01) (Photorhabdus luminescens subsp. laumondii).